Here is a 180-residue protein sequence, read N- to C-terminus: Cytochrome c oxidase assembly protein CtaG (180 aa).

Residues methionine 1 to serine 8 lie on the Cytoplasmic side of the membrane. The chain crosses the membrane as a helical; Signal-anchor for type II membrane protein span at residues leucine 9–proline 29. Residues leucine 30 to lysine 180 are Periplasmic-facing.

This sequence belongs to the COX11/CtaG family.

The protein localises to the cell inner membrane. Its function is as follows. Exerts its effect at some terminal stage of cytochrome c oxidase synthesis, probably by being involved in the insertion of the copper B into subunit I. This chain is Cytochrome c oxidase assembly protein CtaG, found in Rickettsia bellii (strain RML369-C).